A 975-amino-acid polypeptide reads, in one-letter code: Monofunctional C1-tetrahydrofolate synthase, mitochondrial (975 aa).

Residues 1–30 constitute a mitochondrion transit peptide; sequence MSARLPFVLRRLARPQHPGSPRRLPSLCRA. Residues 13-45 form a disordered region; it reads ARPQHPGSPRRLPSLCRASSGRGSGCGGGEGLL. The interval 31-345 is methylenetetrahydrofolate dehydrogenase and cyclohydrolase; that stretch reads SSGRGSGCGG…REQQHRRWRL (315 aa). The span at 34-44 shows a compositional bias: gly residues; that stretch reads RGSGCGGGEGL. At lysine 187 the chain carries N6-acetyllysine; alternate. An N6-succinyllysine; alternate modification is found at lysine 187. Residues 346–975 are formyltetrahydrofolate synthetase; that stretch reads HCLKLQPLSP…TETEQVKGLF (630 aa). Serine 354 carries the post-translational modification Phosphoserine. Residue 420-427 participates in ATP binding; the sequence is TPLGEGKS. Position 593 is an N6-succinyllysine (lysine 593).

It in the N-terminal section; belongs to the tetrahydrofolate dehydrogenase/cyclohydrolase family. In the C-terminal section; belongs to the formate--tetrahydrofolate ligase family. Homodimer.

Its subcellular location is the mitochondrion. The catalysed reaction is (6S)-5,6,7,8-tetrahydrofolate + formate + ATP = (6R)-10-formyltetrahydrofolate + ADP + phosphate. The protein operates within one-carbon metabolism; tetrahydrofolate interconversion. In terms of biological role, may provide the missing metabolic reaction required to link the mitochondria and the cytoplasm in the mammalian model of one-carbon folate metabolism complementing thus the enzymatic activities of MTHFD2. The protein is Monofunctional C1-tetrahydrofolate synthase, mitochondrial (MTHFD1L) of Bos taurus (Bovine).